We begin with the raw amino-acid sequence, 439 residues long: Glucose-1-phosphate adenylyltransferase (439 aa).

Residues Gly-172, 187–188, and Ser-219 each bind alpha-D-glucose 1-phosphate; that span reads EK.

The protein belongs to the bacterial/plant glucose-1-phosphate adenylyltransferase family. Homotetramer.

It carries out the reaction alpha-D-glucose 1-phosphate + ATP + H(+) = ADP-alpha-D-glucose + diphosphate. It functions in the pathway glycan biosynthesis; glycogen biosynthesis. Involved in the biosynthesis of ADP-glucose, a building block required for the elongation reactions to produce glycogen. Catalyzes the reaction between ATP and alpha-D-glucose 1-phosphate (G1P) to produce pyrophosphate and ADP-Glc. The sequence is that of Glucose-1-phosphate adenylyltransferase from Synechocystis sp. (strain ATCC 27184 / PCC 6803 / Kazusa).